The sequence spans 303 residues: Sulfotransferase 6B1 (303 aa).

65-70 (KCGSNW) provides a ligand contact to 3'-phosphoadenylyl sulfate. His118 (proton acceptor) is an active-site residue. Residues Arg140, Ser148, Tyr203, 237 to 242 (STFQAM), and 259 to 261 (RKG) contribute to the 3'-phosphoadenylyl sulfate site.

This sequence belongs to the sulfotransferase 1 family.

It localises to the cytoplasm. It is found in the cytosol. It catalyses the reaction thyroxine + 3'-phosphoadenylyl sulfate = thyroxine sulfate + adenosine 3',5'-bisphosphate + H(+). Functionally, sulfotransferase that utilizes 3'-phospho-5'-adenylyl sulfate (PAPS) as sulfonate donor to catalyze the sulfate conjugation of thyroxine. Involved in the metabolism of thyroxine. This is Sulfotransferase 6B1 (SULT6B1) from Pan troglodytes (Chimpanzee).